We begin with the raw amino-acid sequence, 125 residues long: Holo-[acyl-carrier-protein] synthase (125 aa).

Asp-8 and Glu-56 together coordinate Mg(2+).

Belongs to the P-Pant transferase superfamily. AcpS family. Mg(2+) serves as cofactor.

It is found in the cytoplasm. It carries out the reaction apo-[ACP] + CoA = holo-[ACP] + adenosine 3',5'-bisphosphate + H(+). Functionally, transfers the 4'-phosphopantetheine moiety from coenzyme A to a Ser of acyl-carrier-protein. The chain is Holo-[acyl-carrier-protein] synthase from Borrelia turicatae (strain 91E135).